The sequence spans 75 residues: Salivary glue protein Sgs-8 (75 aa).

An N-terminal signal peptide occupies residues 1 to 24 (MKLLVVAVIACIMLIGFADPASGC).

The chain is Salivary glue protein Sgs-8 (Sgs8) from Drosophila melanogaster (Fruit fly).